A 352-amino-acid polypeptide reads, in one-letter code: tRNA (guanine-N(1)-)-methyltransferase (352 aa).

Residues glycine 109 and 129–134 contribute to the S-adenosyl-L-methionine site; that span reads IGDYVL.

This sequence belongs to the RNA methyltransferase TrmD family. As to quaternary structure, homodimer.

Its subcellular location is the cytoplasm. The catalysed reaction is guanosine(37) in tRNA + S-adenosyl-L-methionine = N(1)-methylguanosine(37) in tRNA + S-adenosyl-L-homocysteine + H(+). Specifically methylates guanosine-37 in various tRNAs. The polypeptide is tRNA (guanine-N(1)-)-methyltransferase (Chlamydia trachomatis serovar A (strain ATCC VR-571B / DSM 19440 / HAR-13)).